The following is a 322-amino-acid chain: tRNA-dihydrouridine(16) synthase (322 aa).

FMN is bound by residues 7–9 (PME) and Q68. The active-site Proton donor is C98. Residues K139, 200–202 (NGE), and 224–225 (CR) contribute to the FMN site.

Belongs to the Dus family. DusC subfamily. It depends on FMN as a cofactor.

The enzyme catalyses 5,6-dihydrouridine(16) in tRNA + NADP(+) = uridine(16) in tRNA + NADPH + H(+). The catalysed reaction is 5,6-dihydrouridine(16) in tRNA + NAD(+) = uridine(16) in tRNA + NADH + H(+). Functionally, catalyzes the synthesis of 5,6-dihydrouridine (D), a modified base found in the D-loop of most tRNAs, via the reduction of the C5-C6 double bond in target uridines. Specifically modifies U16 in tRNAs. The protein is tRNA-dihydrouridine(16) synthase of Vibrio parahaemolyticus serotype O3:K6 (strain RIMD 2210633).